Consider the following 289-residue polypeptide: 2,3-dimethylmalate lyase (289 aa).

The protein belongs to the isocitrate lyase/PEP mutase superfamily. As to quaternary structure, homotetramer. Mg(2+) serves as cofactor.

The catalysed reaction is (2R,3S)-2,3-dimethylmalate = propanoate + pyruvate. Its pathway is cofactor degradation; nicotinate degradation; propanoate and pyruvate from 6-hydroxynicotinate: step 8/8. Completely inhibited by propionic anhydride and by cystamine. Irreversibly inhibited by the mercapto reagents iodoacetate and iodoacetamide. Unaffected by hydroxylamine. Functionally, catalyzes the formation of proponate and pyruvate from (2R,3S)-2,3-dimethylmalate. Has no activity toward dimethylmaleate, malate, citramalate, isocitrate and citrate. This is 2,3-dimethylmalate lyase from Eubacterium barkeri (Clostridium barkeri).